We begin with the raw amino-acid sequence, 519 residues long: Acetylcholine receptor subunit beta-like 2 (519 aa).

Residues 1-18 (MWHWSLLCVFLLVPLANS) form the signal peptide. At 19 to 244 (TAPISFEANP…ITFKLTMRRK (226 aa)) the chain is on the extracellular side. N-linked (GlcNAc...) asparagine glycosylation occurs at asparagine 50. A disulfide bond links cysteine 154 and cysteine 168. Helical transmembrane passes span 245–269 (TLFY…VFYL), 277–295 (VTLC…LLLA), and 311–332 (YLLF…VLNI). Residues 333–462 (HFRSPSTHNM…WKFVSMVLDR (130 aa)) lie on the Cytoplasmic side of the membrane. A helical membrane pass occupies residues 463-481 (FFLWLFTLSCVFGTLAIIC).

Belongs to the ligand-gated ion channel (TC 1.A.9) family. Acetylcholine receptor (TC 1.A.9.1) subfamily. CNS in embryos.

The protein localises to the postsynaptic cell membrane. The protein resides in the cell membrane. Functionally, after binding acetylcholine, the AChR responds by an extensive change in conformation that affects all subunits and leads to opening of an ion-conducting channel across the plasma membrane. The chain is Acetylcholine receptor subunit beta-like 2 (nAChRbeta2) from Drosophila melanogaster (Fruit fly).